Consider the following 234-residue polypeptide: MVELQDKVAVVTGASSGIGASIAETLANQGVKVVLTGRDESRLAEVAKRIQDNKQAVVETSIVDVTHKEEVTELVEKTKEKFGQIDILVNSAGLMLSSAITEGDVEAWEAMIDVNIKGTLYTINAVLPSMLNQSSGHIINIASISGFEVTKKSTLYSASKAAVHSITQGLEKELAKTGVRVTSISPGMVDTPLSGDTDWGARKKLDPKDIAEAAIYALQQPSHVNVNEVTVRPV.

Residue 10–34 (VVTGASSGIGASIAETLANQGVKVV) participates in NADP(+) binding. Serine 143 contributes to the substrate binding site. Residue tyrosine 156 is the Proton acceptor of the active site.

It belongs to the short-chain dehydrogenases/reductases (SDR) family.

This is an uncharacterized protein from Staphylococcus saprophyticus subsp. saprophyticus (strain ATCC 15305 / DSM 20229 / NCIMB 8711 / NCTC 7292 / S-41).